The chain runs to 279 residues: Pantothenate synthetase (279 aa).

Position 31 to 38 (31 to 38 (MGALHEGH)) interacts with ATP. The active-site Proton donor is the H38. Position 62 (Q62) interacts with (R)-pantoate. Q62 is a beta-alanine binding site. 148–151 (GEKD) lines the ATP pocket. Q154 contributes to the (R)-pantoate binding site. ATP-binding positions include V177 and 185-188 (LSSR).

It belongs to the pantothenate synthetase family. As to quaternary structure, homodimer.

The protein resides in the cytoplasm. It carries out the reaction (R)-pantoate + beta-alanine + ATP = (R)-pantothenate + AMP + diphosphate + H(+). It functions in the pathway cofactor biosynthesis; (R)-pantothenate biosynthesis; (R)-pantothenate from (R)-pantoate and beta-alanine: step 1/1. Catalyzes the condensation of pantoate with beta-alanine in an ATP-dependent reaction via a pantoyl-adenylate intermediate. The polypeptide is Pantothenate synthetase (Cereibacter sphaeroides (strain ATCC 17023 / DSM 158 / JCM 6121 / CCUG 31486 / LMG 2827 / NBRC 12203 / NCIMB 8253 / ATH 2.4.1.) (Rhodobacter sphaeroides)).